Consider the following 181-residue polypeptide: Adenine phosphoribosyltransferase (181 aa).

Belongs to the purine/pyrimidine phosphoribosyltransferase family. As to quaternary structure, homodimer.

It is found in the cytoplasm. It catalyses the reaction AMP + diphosphate = 5-phospho-alpha-D-ribose 1-diphosphate + adenine. It participates in purine metabolism; AMP biosynthesis via salvage pathway; AMP from adenine: step 1/1. Catalyzes a salvage reaction resulting in the formation of AMP, that is energically less costly than de novo synthesis. The polypeptide is Adenine phosphoribosyltransferase (Mesorhizobium japonicum (strain LMG 29417 / CECT 9101 / MAFF 303099) (Mesorhizobium loti (strain MAFF 303099))).